The following is a 449-amino-acid chain: Gamma-aminobutyric acid receptor subunit delta (449 aa).

The N-terminal stretch at 1–24 is a signal peptide; that stretch reads MDVLGWLLLPLLLLCTQPHHGARA. The Extracellular portion of the chain corresponds to 25–251; sequence MNDIGDYVGS…QLRRNRGVYI (227 aa). Residues Asn103 and Asn106 are each glycosylated (N-linked (GlcNAc...) asparagine). Cys164 and Cys178 are joined by a disulfide. A helical transmembrane segment spans residues 252–271; it reads IQSYMPSVLLVAMSWVSFWI. Over 272–275 the chain is Cytoplasmic; that stretch reads SQAA. The helical transmembrane segment at 276-298 threads the bilayer; it reads VPARVSLGITTVLTMTTLMVSAR. The Extracellular portion of the chain corresponds to 299–308; sequence SSLPRASAIK. The chain crosses the membrane as a helical span at residues 309–331; the sequence is ALDVYFWICYVFVFAALVEYAFA. Over 332 to 423 the chain is Cytoplasmic; it reads HFNADYRKKR…SRLKPIDADT (92 aa). A Phosphoserine modification is found at Ser390. A helical membrane pass occupies residues 424-446; it reads IDIYARAVFPAAFAAVNIIYWAA. The Extracellular portion of the chain corresponds to 447–449; the sequence is YTM.

This sequence belongs to the ligand-gated ion channel (TC 1.A.9) family. Gamma-aminobutyric acid receptor (TC 1.A.9.5) subfamily. GABRD sub-subfamily. As to quaternary structure, heteropentamer, formed by a combination of alpha (GABRA1-6), beta (GABRB1-3), gamma (GABRG1-3), delta (GABRD), epsilon (GABRE), rho (GABRR1-3), pi (GABRP) and theta (GABRQ) chains, each subunit exhibiting distinct physiological and pharmacological properties.

It is found in the cell membrane. The catalysed reaction is chloride(in) = chloride(out). Its function is as follows. Delta subunit of the heteropentameric ligand-gated chloride channel gated by gamma-aminobutyric acid (GABA), a major inhibitory neurotransmitter in the brain. GABA-gated chloride channels, also named GABA(A) receptors (GABAAR), consist of five subunits arranged around a central pore and contain GABA active binding site(s) located at the alpha and beta subunit interface(s). When activated by GABA, GABAARs selectively allow the flow of chloride anions across the cell membrane down their electrochemical gradient. GABAARs containing delta/GABRD subunits are predominantly expressed and located in extrasynaptic or perisynaptic positions on hippocampus and cerebellar granule cells, and contribute to the tonic GABAergic inhibition. GABAAR containing alpha-4-beta-3-delta subunits can simultaneously bind GABA and histamine where histamine binds at the interface of two neighboring beta subunits, which may be involved in the regulation of sleep and wakefulness. This Mus musculus (Mouse) protein is Gamma-aminobutyric acid receptor subunit delta.